Here is a 552-residue protein sequence, read N- to C-terminus: MDIKRTVLWVIFFMSAVMLYDNWQRDHGRPSMFFPSATHTAPAAAGGASGTGATTAGDVPAAAAGAAPSTTAPAAQAQLVKFSTDVYDGEIDTRGGTLAKLTLKKQGDGKQPDLYITLFDHTAGHTYLARTGLLGGDFPNHNDVYTQLNPGSTSLTGDQNTLKLSFESPVKGGVKVVKTYTFTRGSYVIGVDTKIDNVGTAPVTPTVYMELVRDNTAVETPMFSHTFLGPAVYTDAKHFQKIDFSDLDKNKANFEKSADNGWVAMVQHYFASAWIPQQGAKRDIYAEKIDPALYRVGVKQPVAAIAPGQSADVQARLFAGPEEERMLEGIAPGLELVKDYGWVTIIAKPLFWLLEKIHGYVGNWGWAIVLLTVLIKAVFFPLSAASYKSMARMKEITPRMQALRERFKSDPQKMNAALMELYKTEKVNPFGGCLPVVIQIPVFISLYWVLLASVEMRGAPWILWIHDLSQRDPFFILPVLMAVSMFVQTSLNPTPPDPVQAKMMKFMPIAFSVMFFFFPAGLVLYYVVNNVLSIAQQYYITRKLGGVKKKPA.

Helical transmembrane passes span valine 7–glutamine 24, tryptophan 364–alanine 384, leucine 434–valine 454, proline 473–proline 493, and proline 508–valine 528.

Belongs to the OXA1/ALB3/YidC family. Type 1 subfamily. As to quaternary structure, interacts with the Sec translocase complex via SecD. Specifically interacts with transmembrane segments of nascent integral membrane proteins during membrane integration.

Its subcellular location is the cell inner membrane. Required for the insertion and/or proper folding and/or complex formation of integral membrane proteins into the membrane. Involved in integration of membrane proteins that insert both dependently and independently of the Sec translocase complex, as well as at least some lipoproteins. Aids folding of multispanning membrane proteins. The polypeptide is Membrane protein insertase YidC (Burkholderia cenocepacia (strain ATCC BAA-245 / DSM 16553 / LMG 16656 / NCTC 13227 / J2315 / CF5610) (Burkholderia cepacia (strain J2315))).